Reading from the N-terminus, the 616-residue chain is Dihydroxy-acid dehydratase (616 aa).

Mg(2+) is bound at residue Asp-81. Cys-122 provides a ligand contact to [2Fe-2S] cluster. 2 residues coordinate Mg(2+): Asp-123 and Lys-124. At Lys-124 the chain carries N6-carboxylysine. Residue Cys-195 coordinates [2Fe-2S] cluster. Glu-491 is a Mg(2+) binding site. Catalysis depends on Ser-517, which acts as the Proton acceptor.

This sequence belongs to the IlvD/Edd family. In terms of assembly, homodimer. [2Fe-2S] cluster is required as a cofactor. The cofactor is Mg(2+).

The enzyme catalyses (2R)-2,3-dihydroxy-3-methylbutanoate = 3-methyl-2-oxobutanoate + H2O. The catalysed reaction is (2R,3R)-2,3-dihydroxy-3-methylpentanoate = (S)-3-methyl-2-oxopentanoate + H2O. It functions in the pathway amino-acid biosynthesis; L-isoleucine biosynthesis; L-isoleucine from 2-oxobutanoate: step 3/4. The protein operates within amino-acid biosynthesis; L-valine biosynthesis; L-valine from pyruvate: step 3/4. Functions in the biosynthesis of branched-chain amino acids. Catalyzes the dehydration of (2R,3R)-2,3-dihydroxy-3-methylpentanoate (2,3-dihydroxy-3-methylvalerate) into 2-oxo-3-methylpentanoate (2-oxo-3-methylvalerate) and of (2R)-2,3-dihydroxy-3-methylbutanoate (2,3-dihydroxyisovalerate) into 2-oxo-3-methylbutanoate (2-oxoisovalerate), the penultimate precursor to L-isoleucine and L-valine, respectively. The sequence is that of Dihydroxy-acid dehydratase from Shigella boydii serotype 4 (strain Sb227).